The chain runs to 552 residues: uncharacterized protein (552 aa).

The DhaL domain maps to 8–200 (KLFADMIIQG…LLCVYEGFLK (193 aa)).

This is an uncharacterized protein from Staphylococcus epidermidis (strain ATCC 12228 / FDA PCI 1200).